The chain runs to 929 residues: Transcription initiation factor TFIID subunit 3 (929 aa).

Disordered regions lie at residues 131–152 (IVSS…TSAE) and 176–197 (LGKR…RPRL). Phosphoserine is present on residues serine 183, serine 199, serine 229, and serine 243. Disordered stretches follow at residues 221–358 (TQKI…ETIQ) and 405–578 (DPFE…PWKE). A compositionally biased stretch (low complexity) spans 265–288 (TKSFTPKTKTKTSSPGQKTKSPKT). Lysine 266 bears the N6-acetyllysine mark. Phosphoserine occurs at positions 291, 297, and 301. Polar residues-rich tracts occupy residues 340 to 358 (PNRT…ETIQ) and 434 to 466 (PKAS…SWTM). Threonine 501 is subject to Phosphothreonine. The segment covering 504 to 514 (PLHKVYEEKTK) has biased composition (basic and acidic residues). The segment covering 523–537 (KKLKKELKTKMKKKE) has biased composition (basic residues). Basic and acidic residues predominate over residues 538 to 578 (KQRDREREKDKNKDKSKEKDKVKEKEKDKETGRETKYPWKE). Residue lysine 581 forms a Glycyl lysine isopeptide (Lys-Gly) (interchain with G-Cter in SUMO2) linkage. Basic and acidic residues-rich tracts occupy residues 603–612 (KLKDGLVRKE) and 621–648 (KDRE…DKMK). A disordered region spans residues 603-658 (KLKDGLVRKEKEKHKDKKKDREKGKKDKDKREKEKVKDKGREDKMKAPAPPLVLPP). The residue at position 667 (serine 667) is a Phosphoserine. Residues 692–701 (EKEKVKEKEK) show a composition bias toward basic and acidic residues. A disordered region spans residues 692–748 (EKEKVKEKEKKKDKKEKKKKKEKEKEKKEKEREKEKREREKREKEKEKHKHEKIKVE). A compositionally biased stretch (basic residues) spans 702–713 (KKDKKEKKKKKE). Residues 714–737 (KEKEKKEKEREKEKREREKREKEK) show a composition bias toward basic and acidic residues. Lysine 746 participates in a covalent cross-link: Glycyl lysine isopeptide (Lys-Gly) (interchain with G-Cter in SUMO2). At serine 755 the chain carries Phosphoserine. An N6-acetyllysine modification is found at lysine 776. A compositionally biased stretch (low complexity) spans 778 to 787 (VPAPEAKPAP). The disordered stretch occupies residues 778-807 (VPAPEAKPAPSQNRPKTPPPAPAPAPGPML). Residues 793 to 804 (KTPPPAPAPAPG) show a composition bias toward pro residues. The segment at 865-915 (IWICPGCNKPDDGSPMIGCDDCDDWYHWPCVGIMTAPPEEMQWFCPKCANK) adopts a PHD-type zinc-finger fold. Cysteine 868, cysteine 871, cysteine 883, cysteine 886, histidine 891, cysteine 894, cysteine 909, and cysteine 912 together coordinate Zn(2+).

Belongs to the TAF3 family. In terms of assembly, component of the TFIID basal transcription factor complex, composed of TATA-box-binding protein TBP, and a number of TBP-associated factors (TAFs), including TAF1, TAF2, TAF3, TAF4, TAF5, TAF6, TAF7, TAF8, TAF9, TAF10, TAF11, TAF12 and TAF13. Interacts with TAF10 via the histone fold. Interacts with TAF13, TBP, SAP130 and GCN5L2. Interacts with TBPL2.

The protein localises to the nucleus. Its function is as follows. The TFIID basal transcription factor complex plays a major role in the initiation of RNA polymerase II (Pol II)-dependent transcription. TFIID recognizes and binds promoters with or without a TATA box via its subunit TBP, a TATA-box-binding protein, and promotes assembly of the pre-initiation complex (PIC). The TFIID complex consists of TBP and TBP-associated factors (TAFs), including TAF1, TAF2, TAF3, TAF4, TAF5, TAF6, TAF7, TAF8, TAF9, TAF10, TAF11, TAF12 and TAF13. The TFIID complex structure can be divided into 3 modules TFIID-A, TFIID-B, and TFIID-C. TAF3 forms the TFIID-A module together with TAF5 and TBP. Required in complex with TBPL2 for the differentiation of myoblasts into myocytes. The TAF3-TBPL2 complex replaces TFIID at specific promoters at an early stage in the differentiation process. In Homo sapiens (Human), this protein is Transcription initiation factor TFIID subunit 3 (TAF3).